A 1627-amino-acid polypeptide reads, in one-letter code: Pleckstrin homology domain-containing family G member 4B (1627 aa).

Disordered stretches follow at residues 211–349 (YSSC…VQPR), 381–475 (LTGA…GQAV), 501–537 (VSTD…GTGD), 959–1008 (SEAA…PAQP), 1049–1111 (TTAH…SKGL), and 1124–1159 (PLWQ…QVGS). Over residues 241 to 251 (GSASCPDTLTS) the composition is skewed to polar residues. 2 stretches are compositionally biased toward basic and acidic residues: residues 262–273 (QLRHLPYPERAE) and 310–322 (ERPD…DRPK). The segment covering 465 to 474 (RPGGHLGGQA) has biased composition (gly residues). Residues 975 to 985 (PKHERAQEAMR) are compositionally biased toward basic and acidic residues. Polar residues predominate over residues 1057–1068 (SACSSEPTQTLA). The segment covering 1070–1081 (RPRKHPQKKMIK) has biased composition (basic residues). 2 stretches are compositionally biased toward polar residues: residues 1101–1111 (PDHTSVFSKGL) and 1133–1144 (PVTQSRSLSSPS). One can recognise a DH domain in the interval 1161–1340 (RLRHIMAEMI…CFQLRHGNDL (180 aa)). The PH domain occupies 1352–1460 (NLKEQGQLRC…WTDVIGRILW (109 aa)). The interval 1519–1558 (KGTESQMRGSTAVSSSDHAAPFKRPHSTISDSSTSSSSSQ) is disordered. Over residues 1521 to 1535 (TESQMRGSTAVSSSD) the composition is skewed to polar residues. The span at 1545–1558 (STISDSSTSSSSSQ) shows a compositional bias: low complexity.

In terms of assembly, found in a complex with ARHGEF11 and ARHGEF12; binding to ARHGEF11 and ARHGEF12 enhances CDC42 GEF activity of PLEKHG4B, and PLEKHG4B, in turn, inhibits ARHGEF11- and ARHGEF12-mediated RHOA activation. Interacts with ANXA2; this interaction is required for PLEKHG4B localization to cell-cell adhesions.

Its subcellular location is the basal cell membrane. The protein resides in the cell junction. It localises to the nucleus. It is found in the cytoplasm. Its function is as follows. Guanine nucleotide exchange factor (GEF) which specifically activates small GTPase CDC42 by exchanging bound GDP for free GTP. Plays a role in actin cytoskeletal remodeling in the late stage of cell-cell junction formation by regulating the contractility of actin filaments, which prompts the conversion from 'open' to 'closed' junctions. The polypeptide is Pleckstrin homology domain-containing family G member 4B (Homo sapiens (Human)).